The primary structure comprises 229 residues: Large ribosomal subunit protein uL1c (229 aa).

This sequence belongs to the universal ribosomal protein uL1 family. Part of the 50S ribosomal subunit.

It localises to the plastid. It is found in the chloroplast. Binds directly to 23S rRNA. Might be involved in E site tRNA release (Potential). The sequence is that of Large ribosomal subunit protein uL1c (rpl1) from Porphyra purpurea (Red seaweed).